Reading from the N-terminus, the 673-residue chain is Protein-arginine deiminase type-2 (673 aa).

At Met-1 the chain carries N-acetylmethionine. Residues Asp-131, Asp-133, Asp-135, Glu-139, Asn-162, Asp-164, Asp-166, Asp-174, Asp-177, Lys-179, Asp-185, and Asp-188 each contribute to the Ca(2+) site. A Citrulline modification is found at Arg-352. Ca(2+)-binding residues include Glu-362, Asp-397, Phe-416, Leu-419, and Glu-420. Cys-655 serves as the catalytic Nucleophile.

Belongs to the protein arginine deiminase family. Homodimer. The cofactor is Ca(2+). In terms of tissue distribution, expressed in various tissues including muscle, uterus, spinal cord, salivary gland and pancreas.

The protein resides in the cytoplasm. It carries out the reaction L-arginyl-[protein] + H2O = L-citrullyl-[protein] + NH4(+). In terms of biological role, catalyzes the deimination of arginine residues of proteins. The sequence is that of Protein-arginine deiminase type-2 (Padi2) from Mus musculus (Mouse).